The sequence spans 666 residues: Threonine--tRNA ligase (666 aa).

Residues 7 to 70 (QQVTLTVTLP…TADCTAEIIT (64 aa)) form the TGS domain. The catalytic stretch occupies residues 253 to 555 (DHRKLGTELE…LIEHTAGNFP (303 aa)). Zn(2+) contacts are provided by Cys351, His402, and His532.

Belongs to the class-II aminoacyl-tRNA synthetase family. Homodimer. The cofactor is Zn(2+).

It is found in the cytoplasm. It carries out the reaction tRNA(Thr) + L-threonine + ATP = L-threonyl-tRNA(Thr) + AMP + diphosphate + H(+). Functionally, catalyzes the attachment of threonine to tRNA(Thr) in a two-step reaction: L-threonine is first activated by ATP to form Thr-AMP and then transferred to the acceptor end of tRNA(Thr). Also edits incorrectly charged L-seryl-tRNA(Thr). In Chlorobium phaeovibrioides (strain DSM 265 / 1930) (Prosthecochloris vibrioformis (strain DSM 265)), this protein is Threonine--tRNA ligase.